Consider the following 1328-residue polypeptide: Myb-binding protein 1A (1328 aa).

The segment at 1 to 22 (MESRDPAQPMSPGEATQSGARP) is disordered. The tract at residues 1 to 582 (MESRDPAQPM…WDRMLQTLKE (582 aa)) is interaction with MYB. Serine 11 carries the post-translational modification Phosphoserine. 2 positions are modified to N6-acetyllysine: lysine 71 and lysine 158. 2 consecutive short sequence motifs (nuclear export signal) follow at residues 240 to 258 (SDENVPRLVNVLKMAASSV) and 263 to 281 (KLPAIALDLLRLALKEDKF). Residues 698–753 (SEDENDRVVVTDDSDERRLKGAEDKSEEGEDNRSSESEEESEGEESEEEERDGDVD) are disordered. Over residues 703 to 721 (DRVVVTDDSDERRLKGAED) the composition is skewed to basic and acidic residues. A compositionally biased stretch (acidic residues) spans 734 to 752 (SEEESEGEESEEEERDGDV). Residue serine 775 is modified to Phosphoserine. The interval 1146–1292 (RPKLEKKDAK…KKGVLGKSPL (147 aa)) is disordered. Over residues 1147–1156 (PKLEKKDAKE) the composition is skewed to basic and acidic residues. Residue lysine 1148 forms a Glycyl lysine isopeptide (Lys-Gly) (interchain with G-Cter in SUMO2) linkage. Residues 1151–1328 (KKDAKEIPSA…KAQVRKAGKP (178 aa)) form a required for nuclear and nucleolar localization region. 2 positions are modified to phosphoserine: serine 1159 and serine 1163. Over residues 1166–1184 (SKKRKKKGFLPETKKRKKR) the composition is skewed to basic residues. Position 1186 is a phosphoserine (serine 1186). Phosphothreonine occurs at positions 1190 and 1196. Serine 1207 is subject to Phosphoserine. Residues 1209-1218 (GRKKRNRTKA) show a composition bias toward basic residues. Phosphoserine is present on serine 1232. Residue threonine 1239 is modified to Phosphothreonine. At serine 1241 the chain carries Phosphoserine. At threonine 1244 the chain carries Phosphothreonine. Phosphoserine occurs at positions 1248 and 1267. Threonine 1269 is modified (phosphothreonine). 2 positions are modified to phosphoserine: serine 1290 and serine 1303. The segment at 1306 to 1328 (IRSPSLLQSGAKKKAQVRKAGKP) is disordered. Arginine 1307 carries the post-translational modification Citrulline. Serine 1308, serine 1310, and serine 1314 each carry phosphoserine. Over residues 1316-1328 (AKKKAQVRKAGKP) the composition is skewed to basic residues.

The protein belongs to the MYBBP1A family. As to quaternary structure, binds to and represses JUN and MYB via the leucine zipper regions present in these proteins. Also binds to and represses PPARGC1A: this interaction is abrogated when PPARGC1A is phosphorylated by MAPK1/ERK. Binds to and stimulates transcription by AHR. Binds to KPNA2. Interacts with CLOCK and CRY1. Component of the B-WICH complex, at least composed of SMARCA5/SNF2H, BAZ1B/WSTF, SF3B1, DEK, MYO1C, ERCC6, MYBBP1A and DDX21. In terms of processing, citrullinated by PADI4.

The protein localises to the cytoplasm. It is found in the nucleus. Its subcellular location is the nucleolus. Its function is as follows. May activate or repress transcription via interactions with sequence specific DNA-binding proteins. Repression may be mediated at least in part by histone deacetylase activity (HDAC activity). Acts as a corepressor and in concert with CRY1, represses the transcription of the core circadian clock component PER2. Preferentially binds to dimethylated histone H3 'Lys-9' (H3K9me2) on the PER2 promoter. Has a role in rRNA biogenesis together with PWP1. In Homo sapiens (Human), this protein is Myb-binding protein 1A (MYBBP1A).